The primary structure comprises 360 residues: DNA replication and repair protein RecF (360 aa).

Gly-30 to Thr-37 lines the ATP pocket.

It belongs to the RecF family.

It localises to the cytoplasm. In terms of biological role, the RecF protein is involved in DNA metabolism; it is required for DNA replication and normal SOS inducibility. RecF binds preferentially to single-stranded, linear DNA. It also seems to bind ATP. The chain is DNA replication and repair protein RecF from Shewanella sp. (strain W3-18-1).